Reading from the N-terminus, the 199-residue chain is NAD(P)H dehydrogenase (quinone) (199 aa).

The region spanning 4 to 190 (VLVLYYSAYG…DAARFQGAHV (187 aa)) is the Flavodoxin-like domain. FMN-binding positions include 10-15 (SAYGHI) and 78-80 (TRY). NAD(+) is bound at residue Y12. Residue W98 participates in substrate binding. FMN is bound by residues 113–119 (SSATQHG) and H134.

It belongs to the WrbA family. It depends on FMN as a cofactor.

It carries out the reaction a quinone + NADH + H(+) = a quinol + NAD(+). It catalyses the reaction a quinone + NADPH + H(+) = a quinol + NADP(+). This is NAD(P)H dehydrogenase (quinone) from Sinorhizobium fredii (strain NBRC 101917 / NGR234).